We begin with the raw amino-acid sequence, 159 residues long: 2-C-methyl-D-erythritol 2,4-cyclodiphosphate synthase (159 aa).

Residues D8 and H10 each coordinate a divalent metal cation. 4-CDP-2-C-methyl-D-erythritol 2-phosphate-binding positions include 8-10 (DVH) and 34-35 (HS). A divalent metal cation is bound at residue H42. Residues 56 to 58 (DIG), 61 to 65 (FPDTD), 100 to 106 (AQAPKML), 132 to 135 (TTTE), F139, and R142 contribute to the 4-CDP-2-C-methyl-D-erythritol 2-phosphate site.

It belongs to the IspF family. In terms of assembly, homotrimer. A divalent metal cation serves as cofactor.

The catalysed reaction is 4-CDP-2-C-methyl-D-erythritol 2-phosphate = 2-C-methyl-D-erythritol 2,4-cyclic diphosphate + CMP. It participates in isoprenoid biosynthesis; isopentenyl diphosphate biosynthesis via DXP pathway; isopentenyl diphosphate from 1-deoxy-D-xylulose 5-phosphate: step 4/6. Involved in the biosynthesis of isopentenyl diphosphate (IPP) and dimethylallyl diphosphate (DMAPP), two major building blocks of isoprenoid compounds. Catalyzes the conversion of 4-diphosphocytidyl-2-C-methyl-D-erythritol 2-phosphate (CDP-ME2P) to 2-C-methyl-D-erythritol 2,4-cyclodiphosphate (ME-CPP) with a corresponding release of cytidine 5-monophosphate (CMP). This is 2-C-methyl-D-erythritol 2,4-cyclodiphosphate synthase from Salmonella dublin (strain CT_02021853).